The sequence spans 338 residues: 1-aminocyclopropane-1-carboxylate deaminase (338 aa).

K51 is subject to N6-(pyridoxal phosphate)lysine. S78 functions as the Nucleophile in the catalytic mechanism.

The protein belongs to the ACC deaminase/D-cysteine desulfhydrase family. Homotrimer. Pyridoxal 5'-phosphate is required as a cofactor.

The catalysed reaction is 1-aminocyclopropane-1-carboxylate + H2O = 2-oxobutanoate + NH4(+). In terms of biological role, catalyzes a cyclopropane ring-opening reaction, the irreversible conversion of 1-aminocyclopropane-1-carboxylate (ACC) to ammonia and alpha-ketobutyrate. Allows growth on ACC as a nitrogen source. In Burkholderia vietnamiensis (strain G4 / LMG 22486) (Burkholderia cepacia (strain R1808)), this protein is 1-aminocyclopropane-1-carboxylate deaminase.